The chain runs to 336 residues: tRNA N6-adenosine threonylcarbamoyltransferase (336 aa).

The Fe cation site is built by His114 and His118. Substrate is bound by residues 136 to 140 (LVSGG), Asp169, Gly182, Asp186, and Asn275. Asp301 contributes to the Fe cation binding site.

This sequence belongs to the KAE1 / TsaD family. It depends on Fe(2+) as a cofactor.

The protein localises to the cytoplasm. It carries out the reaction L-threonylcarbamoyladenylate + adenosine(37) in tRNA = N(6)-L-threonylcarbamoyladenosine(37) in tRNA + AMP + H(+). Its function is as follows. Required for the formation of a threonylcarbamoyl group on adenosine at position 37 (t(6)A37) in tRNAs that read codons beginning with adenine. Is involved in the transfer of the threonylcarbamoyl moiety of threonylcarbamoyl-AMP (TC-AMP) to the N6 group of A37, together with TsaE and TsaB. TsaD likely plays a direct catalytic role in this reaction. The protein is tRNA N6-adenosine threonylcarbamoyltransferase of Streptococcus sanguinis (strain SK36).